Here is a 201-residue protein sequence, read N- to C-terminus: Recombination protein RecR (201 aa).

The C4-type zinc-finger motif lies at 57-72; that stretch reads CADCRTFTEQEICTIC. A Toprim domain is found at 81–176; it reads GLICVVESPA…DASRIAHGVP (96 aa).

The protein belongs to the RecR family.

Its function is as follows. May play a role in DNA repair. It seems to be involved in an RecBC-independent recombinational process of DNA repair. It may act with RecF and RecO. This is Recombination protein RecR from Erwinia tasmaniensis (strain DSM 17950 / CFBP 7177 / CIP 109463 / NCPPB 4357 / Et1/99).